Consider the following 512-residue polypeptide: Glucose-6-phosphate 1-dehydrogenase (512 aa).

Residues R61, 103–104, and K171 each bind NADP(+); that span reads EF. 4 residues coordinate substrate: H201, K205, E239, and D258. H263 functions as the Proton acceptor in the catalytic mechanism. Positions 360 and 365 each coordinate substrate. Residues 479 to 512 form a disordered region; that stretch reads QDSSPSFPNYPAGSSGPKEADALIERDGRSWRPL. Residues 496-512 are compositionally biased toward basic and acidic residues; the sequence is KEADALIERDGRSWRPL.

Belongs to the glucose-6-phosphate dehydrogenase family.

It carries out the reaction D-glucose 6-phosphate + NADP(+) = 6-phospho-D-glucono-1,5-lactone + NADPH + H(+). It participates in carbohydrate degradation; pentose phosphate pathway; D-ribulose 5-phosphate from D-glucose 6-phosphate (oxidative stage): step 1/3. Catalyzes the oxidation of glucose 6-phosphate to 6-phosphogluconolactone. This Chlamydia pneumoniae (Chlamydophila pneumoniae) protein is Glucose-6-phosphate 1-dehydrogenase.